We begin with the raw amino-acid sequence, 97 residues long: Protein S100-A10 (97 aa).

N6-acetyllysine is present on residues Lys-23 and Lys-28. An N6-acetyllysine; alternate modification is found at Lys-37. Lys-37 participates in a covalent cross-link: Glycyl lysine isopeptide (Lys-Gly) (interchain with G-Cter in SUMO2); alternate. An N6-acetyllysine mark is found at Lys-54 and Lys-57. Positions 60 to 71 (DQCRDGKVGFQS) are ancestral calcium site.

Belongs to the S-100 family. As to quaternary structure, heterotetramer containing 2 light chains of S100A10/p11 and 2 heavy chains of ANXA2/p36. Interacts with SCN10A. Interacts with TASOR.

Its function is as follows. Because S100A10 induces the dimerization of ANXA2/p36, it may function as a regulator of protein phosphorylation in that the ANXA2 monomer is the preferred target (in vitro) of tyrosine-specific kinase. In Bos taurus (Bovine), this protein is Protein S100-A10 (S100A10).